Here is a 438-residue protein sequence, read N- to C-terminus: Histidine--tRNA ligase (438 aa).

Belongs to the class-II aminoacyl-tRNA synthetase family. Homodimer.

Its subcellular location is the cytoplasm. The catalysed reaction is tRNA(His) + L-histidine + ATP = L-histidyl-tRNA(His) + AMP + diphosphate + H(+). In Thermobifida fusca (strain YX), this protein is Histidine--tRNA ligase (hisS).